A 275-amino-acid polypeptide reads, in one-letter code: Anthracycline biosynthesis protein DauV (275 aa).

VOC domains follow at residues 8–136 and 150–263; these read APAW…VWRK and SVGW…VVEL.

It participates in antibiotic biosynthesis; daunorubicin biosynthesis. Its pathway is antibiotic biosynthesis; carminomycin biosynthesis. In terms of biological role, involved in the biosynthesis of the anthracyclines carminomycin and daunorubicin (daunomycin) which are aromatic polyketide antibiotics that exhibit high cytotoxicity and are widely applied in the chemotherapy of a variety of cancers. Acts jointly with DoxA in the conversion of 13-deoxycarminomycin and 13-deoxydaunorubicin to yield carminomycin and daunorubicin, respectively. The sequence is that of Anthracycline biosynthesis protein DauV (dauV) from Streptomyces sp. (strain C5).